The sequence spans 544 residues: Chaperonin GroEL 2 (544 aa).

Residues 29–32, 86–90, glycine 413, and aspartate 495 each bind ATP; these read TLGP and DGTTT. A disordered region spans residues 525–544; it reads PEPKSNKPAGGGGGVDDYDY. Residues 533–544 are compositionally biased toward gly residues; the sequence is AGGGGGVDDYDY.

This sequence belongs to the chaperonin (HSP60) family. Forms a cylinder of 14 subunits composed of two heptameric rings stacked back-to-back. Interacts with the co-chaperonin GroES.

The protein localises to the cytoplasm. The catalysed reaction is ATP + H2O + a folded polypeptide = ADP + phosphate + an unfolded polypeptide.. In terms of biological role, together with its co-chaperonin GroES, plays an essential role in assisting protein folding. The GroEL-GroES system forms a nano-cage that allows encapsulation of the non-native substrate proteins and provides a physical environment optimized to promote and accelerate protein folding. This chain is Chaperonin GroEL 2, found in Synechococcus sp. (strain JA-3-3Ab) (Cyanobacteria bacterium Yellowstone A-Prime).